The chain runs to 793 residues: Phenylalanine--tRNA ligase beta subunit (793 aa).

One can recognise a tRNA-binding domain in the interval 39 to 148 (AGQFTHVIVA…DEAPIGMDLR (110 aa)). The region spanning 401-477 (PGTVSFLFDT…RLYGYDKLQA (77 aa)) is the B5 domain. The Mg(2+) site is built by aspartate 455, aspartate 461, glutamate 464, and glutamate 465. An FDX-ACB domain is found at 698–792 (SKYPQIRRDL…LENEFSILLR (95 aa)).

It belongs to the phenylalanyl-tRNA synthetase beta subunit family. Type 1 subfamily. Tetramer of two alpha and two beta subunits. Mg(2+) serves as cofactor.

The protein resides in the cytoplasm. The enzyme catalyses tRNA(Phe) + L-phenylalanine + ATP = L-phenylalanyl-tRNA(Phe) + AMP + diphosphate + H(+). This Legionella pneumophila (strain Paris) protein is Phenylalanine--tRNA ligase beta subunit.